Reading from the N-terminus, the 125-residue chain is Large ribosomal subunit protein bL17 (125 aa).

The protein belongs to the bacterial ribosomal protein bL17 family. Part of the 50S ribosomal subunit. Contacts protein L32.

The protein is Large ribosomal subunit protein bL17 of Blochmanniella floridana.